A 647-amino-acid polypeptide reads, in one-letter code: Endogenous retrovirus group K member 8 Gag polyprotein (647 aa).

A lipid anchor (N-myristoyl glycine) is attached at glycine 2. A disordered region spans residues 165 to 264 (GKGPELVGPS…APPSRQGSEL (100 aa)). Over residues 232–247 (GMPPAPQGREPYPQPP) the composition is skewed to pro residues. CCHC-type zinc fingers lie at residues 544–561 (GKCY…NCPV) and 580–597 (DLCP…QCRS). The interval 598-641 (KFDKNGQPLSGNEQRGQPQAPQQTGAFPIQPFVPQGFQDNNPHC) is disordered. The segment covering 604 to 622 (QPLSGNEQRGQPQAPQQTG) has biased composition (polar residues).

Belongs to the beta type-B retroviral Gag protein family. HERV class-II K(HML-2) gag subfamily. Myristoylation is essential for retroviral assembly. Alteration of the glycine residue leads to a block in the budding of particles and an accumulation of Gag inside the cell. In terms of processing, specific enzymatic cleavages may yield mature proteins.

The protein resides in the cell membrane. In terms of biological role, the products of the Gag polyproteins of infectious retroviruses perform highly complex orchestrated tasks during the assembly, budding, maturation, and infection stages of the viral replication cycle. During viral assembly, the proteins form membrane associations and self-associations that ultimately result in budding of an immature virion from the infected cell. Gag precursors also function during viral assembly to selectively bind and package two plus strands of genomic RNA. Endogenous Gag proteins may have kept, lost or modified their original function during evolution. The sequence is that of Endogenous retrovirus group K member 8 Gag polyprotein (ERVK-8) from Homo sapiens (Human).